We begin with the raw amino-acid sequence, 89 residues long: Small ribosomal subunit protein uS15 (89 aa).

This sequence belongs to the universal ribosomal protein uS15 family. In terms of assembly, part of the 30S ribosomal subunit. Forms a bridge to the 50S subunit in the 70S ribosome, contacting the 23S rRNA.

In terms of biological role, one of the primary rRNA binding proteins, it binds directly to 16S rRNA where it helps nucleate assembly of the platform of the 30S subunit by binding and bridging several RNA helices of the 16S rRNA. Functionally, forms an intersubunit bridge (bridge B4) with the 23S rRNA of the 50S subunit in the ribosome. The polypeptide is Small ribosomal subunit protein uS15 (Klebsiella pneumoniae (strain 342)).